Reading from the N-terminus, the 291-residue chain is Bifunctional protein FolD (291 aa).

Residues 167 to 169 (GRS) and S192 contribute to the NADP(+) site.

It belongs to the tetrahydrofolate dehydrogenase/cyclohydrolase family. As to quaternary structure, homodimer.

It catalyses the reaction (6R)-5,10-methylene-5,6,7,8-tetrahydrofolate + NADP(+) = (6R)-5,10-methenyltetrahydrofolate + NADPH. The enzyme catalyses (6R)-5,10-methenyltetrahydrofolate + H2O = (6R)-10-formyltetrahydrofolate + H(+). It participates in one-carbon metabolism; tetrahydrofolate interconversion. Its function is as follows. Catalyzes the oxidation of 5,10-methylenetetrahydrofolate to 5,10-methenyltetrahydrofolate and then the hydrolysis of 5,10-methenyltetrahydrofolate to 10-formyltetrahydrofolate. In Leptospira biflexa serovar Patoc (strain Patoc 1 / Ames), this protein is Bifunctional protein FolD.